We begin with the raw amino-acid sequence, 371 residues long: Queuine tRNA-ribosyltransferase (371 aa).

The Proton acceptor role is filled by Asp-90. Substrate contacts are provided by residues 90–94 (DSGGF), Asp-144, Gln-189, and Gly-215. Residues 246–252 (GVGTPEN) are RNA binding. Residue Asp-265 is the Nucleophile of the active site. Residues 270–274 (TRNAR) form an RNA binding; important for wobble base 34 recognition region. Zn(2+) contacts are provided by Cys-303, Cys-305, Cys-308, and His-334.

It belongs to the queuine tRNA-ribosyltransferase family. As to quaternary structure, homodimer. Within each dimer, one monomer is responsible for RNA recognition and catalysis, while the other monomer binds to the replacement base PreQ1. Zn(2+) is required as a cofactor.

The catalysed reaction is 7-aminomethyl-7-carbaguanine + guanosine(34) in tRNA = 7-aminomethyl-7-carbaguanosine(34) in tRNA + guanine. Its pathway is tRNA modification; tRNA-queuosine biosynthesis. Catalyzes the base-exchange of a guanine (G) residue with the queuine precursor 7-aminomethyl-7-deazaguanine (PreQ1) at position 34 (anticodon wobble position) in tRNAs with GU(N) anticodons (tRNA-Asp, -Asn, -His and -Tyr). Catalysis occurs through a double-displacement mechanism. The nucleophile active site attacks the C1' of nucleotide 34 to detach the guanine base from the RNA, forming a covalent enzyme-RNA intermediate. The proton acceptor active site deprotonates the incoming PreQ1, allowing a nucleophilic attack on the C1' of the ribose to form the product. After dissociation, two additional enzymatic reactions on the tRNA convert PreQ1 to queuine (Q), resulting in the hypermodified nucleoside queuosine (7-(((4,5-cis-dihydroxy-2-cyclopenten-1-yl)amino)methyl)-7-deazaguanosine). The polypeptide is Queuine tRNA-ribosyltransferase (Helicobacter acinonychis (strain Sheeba)).